Here is a 346-residue protein sequence, read N- to C-terminus: Putative aquaporin-7B (346 aa).

Residues 1–40 (MVQASGHRRSTRGSKMVSWSVIAKIQEIWCEEDERKMVRE) are Cytoplasmic-facing. A helical transmembrane segment spans residues 41–58 (FLAEFMSTYVMMVFGLGS). Topologically, residues 59–71 (VAHMVLNKTYGSY) are extracellular. A helical transmembrane segment spans residues 72–89 (LGVNLGFGFGVTMGVHVA). Over 90-93 (GRIS) the chain is Cytoplasmic. The discontinuously helical intramembrane region spans 94–107 (GAHMNAAVTFTNCA). An NPA 1 motif is present at residues 98-100 (NAA). The Cytoplasmic segment spans residues 108–115 (LGRVPWRK). A helical membrane pass occupies residues 116–136 (FPVHVLGQFLGSFLAAATIYS). Over 137–174 (LFYTAILHFSGGELMVTGPFATAGIFATYLPDHMTLWR) the chain is Extracellular. The chain crosses the membrane as a helical span at residues 175 to 192 (GFLNEEWLTRMLQLCLFT). At 193–204 (ITDQENNPALPG) the chain is on the cytoplasmic side. The chain crosses the membrane as a helical span at residues 205 to 221 (THALVISILVVIIRVSH). Over 222–225 (GINT) the chain is Extracellular. Positions 226 to 239 (GYAINPSRDPPPSI) form an intramembrane region, discontinuously helical. Residues 230-232 (NPS) carry the NPA 2 motif. At 240 to 257 (FTFIAGWGKQVFSDGENW) the chain is on the extracellular side. Residues 258–279 (WWVPVVAPLLGASLGGIIYLVF) traverse the membrane as a helical segment. Residues 280 to 346 (IGSTIPREPL…LHESMALEHF (67 aa)) are Cytoplasmic-facing.

Belongs to the MIP/aquaporin (TC 1.A.8) family. Homotetramer; each monomer provides an independent glycerol/water pore.

Its subcellular location is the membrane. It carries out the reaction glycerol(in) = glycerol(out). The enzyme catalyses H2O(in) = H2O(out). Its function is as follows. Aquaglyceroporins form homotetrameric transmembrane channels, with each monomer independently mediating glycerol and water transport across the plasma membrane along their osmotic gradient. The protein is Putative aquaporin-7B of Homo sapiens (Human).